Reading from the N-terminus, the 274-residue chain is Ciliary microtubule inner protein 2B (274 aa).

2 disordered regions span residues 46–89 (SPGL…SSMV) and 119–171 (TQRN…MDDR). Over residues 130–155 (LPKEAKGEKDVEKDQEPKPEVEKEPE) the composition is skewed to basic and acidic residues.

It belongs to the CIMIP2 family. In terms of assembly, microtubule inner protein component of sperm flagellar doublet microtubules. In terms of tissue distribution, expressed in trachea multiciliated cells.

Its subcellular location is the cytoplasm. It is found in the cytoskeleton. The protein resides in the cilium axoneme. The protein localises to the flagellum axoneme. Its function is as follows. Microtubule inner protein (MIP) part of the dynein-decorated doublet microtubules (DMTs) in cilia axoneme, which is required for motile cilia beating. This chain is Ciliary microtubule inner protein 2B (CIMIP2B), found in Bos taurus (Bovine).